Consider the following 571-residue polypeptide: Optineurin (571 aa).

Disordered regions lie at residues 1–32 and 100–144; these read MSHQ…HPNL and LSHE…DQLR. The stretch at 38–170 forms a coiled coil; that stretch reads EELLQQMKEL…VSELQLKLNS (133 aa). Positions 58-209 are interaction with Rab8; sequence MKLNNQAMKG…GPTRTVSIGT (152 aa). Basic and acidic residues-rich tracts occupy residues 100 to 123 and 130 to 143; these read LSHE…RSSE and RLPR…KDQL. Residues 176-181 carry the LIR motif; that stretch reads DSFVEI. S177 is subject to Phosphoserine; by TBK1. Basic and acidic residues predominate over residues 186 to 197; sequence GEAEGSVKEIKH. Disordered regions lie at residues 186 to 210 and 255 to 291; these read GEAE…IGTS and VSDF…TVGS. The residue at position 198 (S198) is a Phosphoserine. Over residues 201–210 the composition is skewed to polar residues; it reads PTRTVSIGTS. The stretch at 233-502 forms a coiled coil; the sequence is CLREGNQKVE…LLKENDAFED (270 aa). Composition is skewed to basic and acidic residues over residues 255–268 and 275–286; these read VSDF…RSEI and STEKENEEEKGP. Position 336 is a phosphoserine (S336). The tract at residues 405-571 is interaction with HD; the sequence is TRKESEKVDR…LQIHVMDCII (167 aa). The segment at 406 to 514 is interaction with MYO6; sequence RKESEKVDRA…RQSLMEMQSR (109 aa). The UBAN motif lies at 468-473; it reads DFHAER. Phosphoserine is present on S520. Residues 541-571 form a CCHC NOA-type zinc finger; that stretch reads QRNIPIHSCPKCGEVLPDIDTLQIHVMDCII. Zn(2+)-binding residues include C549, C552, H565, and C569.

Self-associates. Interacts with HD. Interacts with GTF3A. Interacts with MYO6. Interacts (via UBAN) with ubiquitinated TFRC. Interacts with GTP-bound Rab8 (RAB8A and/or RAB8B). Interacts with TBC1D17. Interacts with TBK1. Interacts with TRAF3. Binds to linear ubiquitin chains. Interacts with LC3 family members MAP1LC3A, MAP1LC3B, GABARAP, GABARAPL1 and GABARAPL2; OPTN phosphorylation increases the association (at least with MAP1LC3B). Interacts with RAB12; the interaction may be indirect. Interacts with TBK1; this interaction leads to the Golgi localization of TBK1 and its subsequent activation. Interacts with palmitoyltransferase ZDHHC17/HIP14; the interaction does not lead to palmitoylation of OPTN. Interacts with CYLD. Interacts with TOM1; the interaction is indirect and is mediated by MYO6, which acts as a bridge between TOM1 and OPTN. Interacts with USP12; the interaction is independent of USP12 deubiquitinase activity and may be involved in regulation of autophagic flux. Phosphorylated by TBK1, leading to restrict bacterial proliferation in case of infection.

The protein localises to the cytoplasm. Its subcellular location is the perinuclear region. It is found in the golgi apparatus. It localises to the trans-Golgi network. The protein resides in the cytoplasmic vesicle. The protein localises to the autophagosome. Its subcellular location is the recycling endosome. In terms of biological role, plays an important role in the maintenance of the Golgi complex, in membrane trafficking, in exocytosis, through its interaction with myosin VI and Rab8. Links myosin VI to the Golgi complex and plays an important role in Golgi ribbon formation. Negatively regulates the induction of IFNB in response to RNA virus infection. Plays a neuroprotective role in the eye and optic nerve. Probably part of the TNF-alpha signaling pathway that can shift the equilibrium toward induction of cell death. May act by regulating membrane trafficking and cellular morphogenesis via a complex that contains Rab8 and huntingtin (HD). Mediates the interaction of Rab8 with the probable GTPase-activating protein TBC1D17 during Rab8-mediated endocytic trafficking, such as that of transferrin receptor (TFRC/TfR); regulates Rab8 recruitment to tubules emanating from the endocytic recycling compartment. Autophagy receptor that interacts directly with both the cargo to become degraded and an autophagy modifier of the MAP1 LC3 family; targets ubiquitin-coated bacteria (xenophagy) and appears to function in the same pathway as SQSTM1 and CALCOCO2/NDP52. The chain is Optineurin (OPTN) from Macaca fascicularis (Crab-eating macaque).